Here is a 540-residue protein sequence, read N- to C-terminus: CWF19-like protein 1 (540 aa).

Positions 265-326 (ENPYRKSDKD…AKQPRKHPQP (62 aa)) are disordered. The span at 267-277 (PYRKSDKDTPK) shows a compositional bias: basic and acidic residues.

It belongs to the CWF19 family.

In Xenopus laevis (African clawed frog), this protein is CWF19-like protein 1 (cwf19l1).